A 434-amino-acid chain; its full sequence is Probable phosphoglucosamine mutase (434 aa).

The active-site Phosphoserine intermediate is the S91. Residues S91, D229, D231, and D233 each contribute to the Mg(2+) site. Position 91 is a phosphoserine (S91).

This sequence belongs to the phosphohexose mutase family. Requires Mg(2+) as cofactor. In terms of processing, activated by phosphorylation.

The catalysed reaction is alpha-D-glucosamine 1-phosphate = D-glucosamine 6-phosphate. In terms of biological role, catalyzes the conversion of glucosamine-6-phosphate to glucosamine-1-phosphate. The sequence is that of Probable phosphoglucosamine mutase from Methanosarcina acetivorans (strain ATCC 35395 / DSM 2834 / JCM 12185 / C2A).